A 785-amino-acid chain; its full sequence is Arrestin domain-containing protein D (785 aa).

Disordered regions lie at residues 29–69, 172–205, 326–367, 435–486, and 608–642; these read QNES…SKYP, ILLP…TTTT, SNNS…ITNN, SNSN…SDHN, and YSSS…LDEQ. Over residues 173-205 the composition is skewed to low complexity; the sequence is LLPTTTSTQNSTLSPTLLSSNLNSKSSTTTTTT. A compositionally biased stretch (low complexity) spans 435 to 450; sequence SNSNSSSSGGSSNKNN. Basic residues predominate over residues 466 to 478; the sequence is SNKKSSGSHRYHY. A compositionally biased stretch (low complexity) spans 608 to 633; the sequence is YSSSGSGSGSGSSNSNSNHSSSNYLN. The FYVE-type zinc finger occupies 682–742; that stretch reads ESSITNCNLC…ICLMCFDAVK (61 aa). Residues Cys-688, Cys-691, Cys-704, Cys-707, Cys-712, Cys-715, Cys-734, and Cys-737 each contribute to the Zn(2+) site. Residues 688–738 form an RING-type; degenerate zinc finger; the sequence is CNLCDNTFTIIRRTHHCRACGGVFCEACSNQKVCLYGFGVNNKVRICLMCF.

Belongs to the arrestin family.

The chain is Arrestin domain-containing protein D (adcD) from Dictyostelium discoideum (Social amoeba).